The primary structure comprises 316 residues: Universal stress protein E (316 aa).

This sequence belongs to the universal stress protein A family.

Its subcellular location is the cytoplasm. Required for resistance to DNA-damaging agents. The protein is Universal stress protein E (uspE) of Escherichia coli O157:H7.